Consider the following 147-residue polypeptide: Large ribosomal subunit protein uL15 (147 aa).

Residues 1–42 (MTIKVHHLRPAPGAKTTKTRVGRGEGSKGKTAGRGTKGSKAR) are disordered.

This sequence belongs to the universal ribosomal protein uL15 family. As to quaternary structure, part of the 50S ribosomal subunit.

In terms of biological role, binds to the 23S rRNA. This chain is Large ribosomal subunit protein uL15, found in Salinispora tropica (strain ATCC BAA-916 / DSM 44818 / JCM 13857 / NBRC 105044 / CNB-440).